A 332-amino-acid polypeptide reads, in one-letter code: Sphingolipid delta(4)-desaturase DES1-like (332 aa).

The next 3 membrane-spanning stretches (helical) occupy residues 55–75 (PWAF…AAIL), 83–103 (ILSI…LAIH), and 119–139 (CLGI…FQKY). Positions 103-107 (HELSH) match the Histidine box-1 motif. The Histidine box-2 motif lies at 140-144 (HLEHH). Transmembrane regions (helical) follow at residues 164–184 (LVTN…FYAL), 197–217 (WEFI…LFFG), and 222–242 (AYLI…GHFI). The Histidine box-3 motif lies at 271-275 (HNEHH).

This sequence belongs to the fatty acid desaturase type 1 family. DEGS subfamily. Specifically expressed in flowers.

The protein localises to the endoplasmic reticulum membrane. It carries out the reaction an N-acylsphinganine + 2 Fe(II)-[cytochrome b5] + O2 + 2 H(+) = an N-acylsphing-4-enine + 2 Fe(III)-[cytochrome b5] + 2 H2O. In terms of biological role, sphingolipid-delta-4-desaturase required for the biosynthesis of delta-4-unsaturated sphingolipids and derivatives. May be required for the biosynthesis of glucosylceramides. The polypeptide is Sphingolipid delta(4)-desaturase DES1-like (Arabidopsis thaliana (Mouse-ear cress)).